Reading from the N-terminus, the 391-residue chain is Histidinol-phosphate aminotransferase (391 aa).

Lysine 248 is subject to N6-(pyridoxal phosphate)lysine.

Belongs to the class-II pyridoxal-phosphate-dependent aminotransferase family. Histidinol-phosphate aminotransferase subfamily. Homodimer. Requires pyridoxal 5'-phosphate as cofactor.

It carries out the reaction L-histidinol phosphate + 2-oxoglutarate = 3-(imidazol-4-yl)-2-oxopropyl phosphate + L-glutamate. Its pathway is amino-acid biosynthesis; L-histidine biosynthesis; L-histidine from 5-phospho-alpha-D-ribose 1-diphosphate: step 7/9. The protein is Histidinol-phosphate aminotransferase of Shewanella oneidensis (strain ATCC 700550 / JCM 31522 / CIP 106686 / LMG 19005 / NCIMB 14063 / MR-1).